The sequence spans 93 residues: Alpha-defensin 6/12 (93 aa).

The signal sequence occupies residues M1 to A19. Positions D20–R60 are excised as a propeptide. The interval Q23–L54 is disordered. Disulfide bonds link C64–C92, C66–C81, and C71–C91.

It belongs to the alpha-defensin family. In terms of tissue distribution, paneth cells of the small bowel.

It is found in the secreted. Its function is as follows. Has broad-spectrum antimicrobial properties. Has antibacterial activity against the Gram-positive bacterium L.monocytogenes EGD and the Gram-negative bacteria E.coli ML-35p and avirulent S.typhimurium 7953, but not against the mouse-virulent S.typhimurium 14028S. Probably contributes to the antimicrobial barrier function of the small bowel mucosa. This Mus musculus (Mouse) protein is Alpha-defensin 6/12 (Defa6).